We begin with the raw amino-acid sequence, 320 residues long: Tetraspanin-32 (320 aa).

4 consecutive transmembrane segments (helical) span residues methionine 14 to leucine 34, tryptophan 60 to alanine 80, leucine 90 to phenylalanine 110, and serine 203 to isoleucine 223.

It belongs to the tetraspanin (TM4SF) family. Expressed ubiquitously at low levels. High levels of expression are confined to hematopoietic tissues including peripheral blood leukocytes, thymus and spleen.

The protein resides in the membrane. This chain is Tetraspanin-32 (TSPAN32), found in Homo sapiens (Human).